The chain runs to 421 residues: Bone morphogenetic protein 10 (421 aa).

The first 21 residues, 1–21 (MGSLVLPLSAVFCLVAHSASG), serve as a signal peptide directing secretion. Residues 22 to 313 (SPIMGLEQSP…IDDSSARIRR (292 aa)) constitute a propeptide that is removed on maturation. 2 N-linked (GlcNAc...) asparagine glycosylation sites follow: Asn-67 and Asn-131. Disulfide bonds link Cys-320/Cys-386, Cys-349/Cys-418, and Cys-353/Cys-420.

This sequence belongs to the TGF-beta family. Homodimer; disulfide-linked. Interacts with FBN1 (via N-terminal domain) and FBN2. Interacts with ENG. In the embryo, expressed exclusively in the ventricular trabecular myocardium of the developing heart from 9.0 dpc-13.5 dpc. By 16.5 dpc-18.5 dpc, only detectable in atria. Highly expressed in the adult heart where it is found in the right atrium but not in the left atrium. Lower levels in adult liver and lung.

It is found in the secreted. Functionally, required for maintaining the proliferative activity of embryonic cardiomyocytes by preventing premature activation of the negative cell cycle regulator CDKN1C/p57KIP and maintaining the required expression levels of cardiogenic factors such as MEF2C and NKX2-5. Acts as a ligand for ACVRL1/ALK1, BMPR1A/ALK3 and BMPR1B/ALK6, leading to activation of SMAD1, SMAD5 and SMAD8 transcription factors. Inhibits endothelial cell migration and growth. May reduce cell migration and cell matrix adhesion in breast cancer cell lines. The chain is Bone morphogenetic protein 10 (Bmp10) from Mus musculus (Mouse).